A 411-amino-acid chain; its full sequence is Protein BTN1 (411 aa).

The signal sequence occupies residues 1-29; that stretch reads MNSKQRVYAFFWIFGLVNNVLYVVILSAA. Helical transmembrane passes span 41-61, 79-99, 127-147, 149-169, 281-300, 307-329, 334-356, and 371-391; these read LVLLMDITPSLLIKVTAPFFI, IGMIFVSGKSLLLCMIGIAMA, SGTGGAGIVGSSVYMLLTSIF, LPIRLSLLSFTILPFAFLLYF, YVTYGTLYQLGVFISRSLAH, LYFLSALQGLNLVLTILQAWIYI, WPIMILIFYEGLLGGSSYVNTFL, and LGAVSIADSLGVFIAALVGLG.

The protein belongs to the battenin family.

Its subcellular location is the vacuole membrane. Functionally, involved in vacuolar transport and vacuole pH homeostasis. Also required for cytokinesis. The sequence is that of Protein BTN1 (BTN1) from Candida glabrata (strain ATCC 2001 / BCRC 20586 / JCM 3761 / NBRC 0622 / NRRL Y-65 / CBS 138) (Yeast).